The sequence spans 852 residues: Disrupted in schizophrenia 1 homolog (852 aa).

3 disordered regions span residues 1-86, 236-264, and 280-320; these read MQGG…GLDP, EAEPLHQRPQEMAAEASSSDRPHGDPRHL, and QVTR…QGGG. Positions 1–294 are interaction with MAP1A; sequence MQGGGPRGAP…SSRQSECGTV (294 aa). A compositionally biased stretch (polar residues) spans 65 to 79; that stretch reads AGLTGQQSQHSQSKA. Basic and acidic residues predominate over residues 253 to 263; the sequence is SSDRPHGDPRH. Low complexity predominate over residues 288 to 311; it reads QSECGTVSSSSSDTGFSSQDASSA. Residues 295–693 are interaction with TRAF3IP1; that stretch reads SSSSSDTGFS…LGRVWKADLE (399 aa). Coiled-coil stretches lie at residues 367 to 397 and 449 to 496; these read EDGDYDTAETLRQRLEELEQEKGRLSWALPS and ITRR…LLRW. The segment at 437 to 594 is required for localization to punctate cytoplasmic foci; it reads LRTTAQDSLP…LLEAKMLALS (158 aa). The tract at residues 443–852 is necessary and sufficient for interaction with PCNT and localization at the centrosome; that stretch reads DSLPASITRR…PTAGAQETEA (410 aa). Positions 595 to 852 are interaction with ATF4 and ATF5; it reads GSCFSTAKEL…PTAGAQETEA (258 aa). Disordered regions lie at residues 706-746 and 833-852; these read EAGS…KSPL and KEAGEASASYPTAGAQETEA. The segment at 728 to 852 is interaction with NDEL1 and PAFAH1B1; sequence TAALAVPRTP…PTAGAQETEA (125 aa). The segment at 728 to 852 is interaction with PAFAH1B1; the sequence is TAALAVPRTP…PTAGAQETEA (125 aa). The tract at residues 802–835 is interaction with NDEL1; the sequence is SHDEALFQSLQGELQTVKETLQAMILQLQPTKEA.

Interacts with NDEL1. Interacts with CCDC88A (via C-terminus); the interaction is direct. Interacts with GSK3B. Interacts with tubulin alpha, ACTN2, ANKHD1, ATF4, ATF5, CEP63, EIF3S3, MAP1A, NDEL1, PAFAH1B1, RANBP9, SPTBN4, SYNE1 and TRAF3IP1. Interaction with microtubules may be mediated in part by TRAF3IP1. Interacts (via C-terminal) with PCNT. Interacts with CHCHD6. Interacts with CCDC141. Interacts with FBXW7, the substrate-recognition component of a SCF (SKP1-CUL1-F-box protein) E3 ubiquitin-protein ligase complex; the interaction targets DISC1 for proteasomal degradation. Interacts with ZNF365. Interacts with ATF4; inhibiting ATF4 transcription factor activity by disrupting ATF4 dimerization and DNA-binding. Interacts with PDE4B. Post-translationally, ubiquitinated. Ubiquitination with 'Lys-48'-linked polyubiquitin chains leads to its proteasomal degradation. As to expression, expressed in granule cell precursors within the dentate migratory stream during the first week of postnatal life and in differentiated granule cells of the hippocampus (at protein level). Detected in heart, brain, kidney, and testis. Expressed in dentate gyrus, hippocampus and in the olfactory bulb.

Its subcellular location is the cytoplasm. It localises to the cytoskeleton. The protein resides in the mitochondrion. The protein localises to the microtubule organizing center. It is found in the centrosome. Its subcellular location is the postsynaptic density. Involved in the regulation of multiple aspects of embryonic and adult neurogenesis. Required for neural progenitor proliferation in the ventrical/subventrical zone during embryonic brain development and in the adult dentate gyrus of the hippocampus. Participates in the Wnt-mediated neural progenitor proliferation as a positive regulator by modulating GSK3B activity and CTNNB1 abundance. Plays a role as a modulator of the AKT-mTOR signaling pathway controlling the tempo of the process of newborn neurons integration during adult neurogenesis, including neuron positioning, dendritic development and synapse formation. Inhibits the activation of AKT-mTOR signaling upon interaction with CCDC88A. Regulates the migration of early-born granule cell precursors toward the dentate gyrus during the hippocampal development. Inhibits ATF4 transcription factor activity in neurons by disrupting ATF4 dimerization and DNA-binding. Plays a role, together with PCNT, in the microtubule network formation. The protein is Disrupted in schizophrenia 1 homolog of Mus musculus (Mouse).